A 187-amino-acid polypeptide reads, in one-letter code: Elongation factor P (187 aa).

The protein belongs to the elongation factor P family.

It localises to the cytoplasm. It participates in protein biosynthesis; polypeptide chain elongation. Functionally, involved in peptide bond synthesis. Stimulates efficient translation and peptide-bond synthesis on native or reconstituted 70S ribosomes in vitro. Probably functions indirectly by altering the affinity of the ribosome for aminoacyl-tRNA, thus increasing their reactivity as acceptors for peptidyl transferase. The chain is Elongation factor P from Magnetococcus marinus (strain ATCC BAA-1437 / JCM 17883 / MC-1).